Reading from the N-terminus, the 340-residue chain is Tetraacyldisaccharide 4'-kinase (340 aa).

ATP is bound at residue 51 to 58 (HMGGAGKT).

Belongs to the LpxK family.

The catalysed reaction is a lipid A disaccharide + ATP = a lipid IVA + ADP + H(+). Its pathway is glycolipid biosynthesis; lipid IV(A) biosynthesis; lipid IV(A) from (3R)-3-hydroxytetradecanoyl-[acyl-carrier-protein] and UDP-N-acetyl-alpha-D-glucosamine: step 6/6. Transfers the gamma-phosphate of ATP to the 4'-position of a tetraacyldisaccharide 1-phosphate intermediate (termed DS-1-P) to form tetraacyldisaccharide 1,4'-bis-phosphate (lipid IVA). This chain is Tetraacyldisaccharide 4'-kinase, found in Rhodopseudomonas palustris (strain ATCC BAA-98 / CGA009).